A 353-amino-acid chain; its full sequence is N-formyl peptide receptor 3 (353 aa).

The Extracellular portion of the chain corresponds to 1–27 (METNFSIPLNETEEVLPEPAGHTVLWI). Residues Asn4 and Asn10 are each glycosylated (N-linked (GlcNAc...) asparagine). Residues 28-50 (FSLLVHGVTFVFGVLGNGLVIWV) traverse the membrane as a helical segment. Topologically, residues 51–61 (AGFRMTRTVNT) are cytoplasmic. Residues 62-83 (ICYLNLALADFSFSAILPFRMV) traverse the membrane as a helical segment. Topologically, residues 84-100 (SVAMREKWPFGSFLCKL) are extracellular. Cys98 and Cys176 are joined by a disulfide. The chain crosses the membrane as a helical span at residues 101–121 (VHVMIDINLFVSVYLITIIAL). Residues 122–140 (DRCICVLHPAWAQNHRTMS) lie on the Cytoplasmic side of the membrane. A helical transmembrane segment spans residues 141–162 (LAKRVMTGLWIFTIVLTLPNFI). The Extracellular portion of the chain corresponds to 163–205 (FWTTISTTNGDTYCIFNFAFWGDTAVERLNVFITMAKVFLILH). The chain crosses the membrane as a helical span at residues 206 to 226 (FIIGFSVPMSIITVCYGIIAA). Residues 227-242 (KIHRNHMIKSSRPLRV) lie on the Cytoplasmic side of the membrane. The chain crosses the membrane as a helical span at residues 243 to 266 (FAAVVASFFICWFPYELIGILMAV). Residues 267-286 (WLKEMLLNGKYKIILVLINP) lie on the Extracellular side of the membrane. The helical transmembrane segment at 287–306 (TSSLAFFNSCLNPILYVFMG) threads the bilayer. Over 307–353 (RNFQERLIRSLPTSLERALTEVPDSAQTSNTDTTSASPPEETELQAM) the chain is Cytoplasmic. The segment at 327–353 (EVPDSAQTSNTDTTSASPPEETELQAM) is disordered. Residues 331 to 343 (SAQTSNTDTTSAS) show a composition bias toward polar residues.

It belongs to the G-protein coupled receptor 1 family. As to expression, detected in various tissues with highest expression in lung.

The protein resides in the cell membrane. Functionally, low affinity receptor for N-formyl-methionyl peptides, which are powerful neutrophils chemotactic factors. Binding of FMLP to the receptor causes activation of neutrophils. This response is mediated via a G-protein that activates a phosphatidylinositol-calcium second messenger system. Acts as a receptor for humanin. In Homo sapiens (Human), this protein is N-formyl peptide receptor 3 (FPR3).